The sequence spans 200 residues: Trem-like transcript 4 protein (200 aa).

The N-terminal stretch at 1–25 (MAWGGVHTCCFHLCCCCSWPQGAVP) is a signal peptide. The Ig-like V-type domain maps to 26–126 (EELHKHPGQT…NIITVLRNIS (101 aa)). The cysteines at positions 40 and 109 are disulfide-linked. The N-linked (GlcNAc...) asparagine glycan is linked to Asn-93.

It localises to the secreted. Functionally, positively regulates Toll-like receptor TLR7 signaling in macrophages. The protein is Trem-like transcript 4 protein (TREML4) of Homo sapiens (Human).